A 109-amino-acid chain; its full sequence is Large ribosomal subunit protein uL22 (109 aa).

A compositionally biased stretch (basic residues) spans 84 to 95 (ARGTASRIRKPT). Positions 84–109 (ARGTASRIRKPTSHIMVEVSKPSKEA) are disordered.

Belongs to the universal ribosomal protein uL22 family. In terms of assembly, part of the 50S ribosomal subunit.

Functionally, this protein binds specifically to 23S rRNA; its binding is stimulated by other ribosomal proteins, e.g. L4, L17, and L20. It is important during the early stages of 50S assembly. It makes multiple contacts with different domains of the 23S rRNA in the assembled 50S subunit and ribosome. In terms of biological role, the globular domain of the protein is located near the polypeptide exit tunnel on the outside of the subunit, while an extended beta-hairpin is found that lines the wall of the exit tunnel in the center of the 70S ribosome. In Campylobacter hominis (strain ATCC BAA-381 / DSM 21671 / CCUG 45161 / LMG 19568 / NCTC 13146 / CH001A), this protein is Large ribosomal subunit protein uL22.